Reading from the N-terminus, the 205-residue chain is MSAQRLISNRTSQQSASNSDYTWEYEYYEIGPVSFEGLKAHKYSIVIGFWVGLAVFVIFMFFVLTLLTKTGAPHQDNAESSEKRFRMNSFVSDFGRPLEPDKVFSRQGNEESRSLFHCYINEVERLDRAKACHQTTALDSDVQLQEAIRSSGQPEEELNRLMKFDIPNFVNTDQNYFGEDDLLISEPPIVLETKPLSQTSHKDLD.

The N-linked (GlcNAc...) asparagine glycan is linked to Asn9. The chain crosses the membrane as a helical span at residues 45 to 65 (IVIGFWVGLAVFVIFMFFVLT). Phosphoserine is present on Ser89.

Belongs to the MRAP family. As to quaternary structure, homodimer and heterodimer. Forms antiparallel homodimers and heterodimers with MRAP. Interacts with MC1R, MC2R, MC3R, MC4R and MC5R. Expressed in the adrenal gland and brain. Not expressed in other tissues.

Its subcellular location is the cell membrane. It is found in the endoplasmic reticulum membrane. Modulator of melanocortin receptor 4 (MC4R), a receptor involved in energy homeostasis. Plays a central role in the control of energy homeostasis and body weight regulation by increasing ligand-sensitivity of MC4R and MC4R-mediated generation of cAMP. May also act as a negative regulator of MC2R: competes with MRAP for binding to MC2R and impairs the binding of corticotropin (ACTH) to MC2R. May also regulate activity of other melanocortin receptors (MC1R, MC3R and MC5R); however, additional evidence is required in vivo. The protein is Melanocortin-2 receptor accessory protein 2 (MRAP2) of Homo sapiens (Human).